Consider the following 198-residue polypeptide: Putative pseudouridine methyltransferase (198 aa).

Positions 132 and 186 each coordinate S-adenosyl-L-methionine.

The protein belongs to the methyltransferase superfamily. TrmY family.

The protein localises to the cytoplasm. This Shewanella baltica (strain OS185) protein is Putative pseudouridine methyltransferase.